The sequence spans 255 residues: Zinc D-Ala-D-Ala carboxypeptidase (255 aa).

An N-terminal signal peptide occupies residues 1–42 (MRPRPIRLLLTALVGAGLAFAPVSAVAAPTATASASADVGAL). Asp43 carries the blocked amino end (Asp) modification. Cystine bridges form between Cys45–Cys123 and Cys136–Cys184. Arg180 serves as a coordination point for substrate. Residue His196 participates in Zn(2+) binding. Cys212 and Cys253 are oxidised to a cystine. His234 serves as the catalytic Proton donor. Zn(2+)-binding residues include His237 and His239.

The protein belongs to the peptidase M15 family. Zn(2+) serves as cofactor. The N-terminus is partially blocked as a result of the cyclization of the first two amino acids into anhydroaspartylglycine imide.

The protein localises to the secreted. The catalysed reaction is Cleavage of the bond: (Ac)2-L-lysyl-D-alanyl-|-D-alanine.. Functionally, this enzyme catalyzes carboxypeptidation and transpeptidation reactions involved in bacterial cell wall metabolism. It effectively catalyzes the transfer of the N-alpha, N-epsilon-diacetyl-L-lysyl-D-alanyl electrophilic group of the standard tripeptide substrate N-alpha,N-epsilon-diacetyl-L-lysyl-D-alanyl-D-alanine to water. It also performs a weak beta-lactamase activity, hydrolyzing penicillin into penicilloate at a very low rate. This chain is Zinc D-Ala-D-Ala carboxypeptidase, found in Streptomyces albus G.